We begin with the raw amino-acid sequence, 259 residues long: Transcription factor bHLH125 (259 aa).

In terms of domain architecture, bHLH spans 73-125 (SKKMKHRDIERQRRQEVSSLFKRLRTLLPFQYIQGKRSTSDHIVQAVNYIKDL).

In terms of assembly, homodimer.

Its subcellular location is the nucleus. The polypeptide is Transcription factor bHLH125 (BHLH125) (Arabidopsis thaliana (Mouse-ear cress)).